Here is a 601-residue protein sequence, read N- to C-terminus: Glutathione-regulated potassium-efflux system protein KefB (601 aa).

Transmembrane regions (helical) follow at residues 4–24 (SDLL…VPLA), 29–49 (IGAV…GLGF), 55–75 (EILH…GLEL), 87–107 (IFGV…GLLM), 115–135 (AAVI…LQLM), 152–172 (VLLF…LLAG), 177–197 (HFDW…LIGG), 207–227 (FIAD…LVLG), 230–250 (LFMD…GVLL), 262–282 (AIDP…GMSL), 284–304 (LGVL…LVAV), 324–344 (MQFA…FSTA), and 356–376 (SLLL…MKLV). Residues 400 to 519 (KPQVIVVGFG…AGVTQFSRET (120 aa)) enclose the RCK N-terminal domain.

Belongs to the monovalent cation:proton antiporter 2 (CPA2) transporter (TC 2.A.37) family. KefB subfamily. In terms of assembly, interacts with the regulatory subunit KefG.

It localises to the cell inner membrane. Functionally, pore-forming subunit of a potassium efflux system that confers protection against electrophiles. Catalyzes K(+)/H(+) antiport. The polypeptide is Glutathione-regulated potassium-efflux system protein KefB (Citrobacter koseri (strain ATCC BAA-895 / CDC 4225-83 / SGSC4696)).